Here is a 274-residue protein sequence, read N- to C-terminus: Large ribosomal subunit protein uL2cz/uL2cy (274 aa).

Disordered regions lie at residues 1-22 and 225-274; these read MAIH…DSQV and PVDH…RRSK.

The protein belongs to the universal ribosomal protein uL2 family. As to quaternary structure, part of the 50S ribosomal subunit.

The protein localises to the plastid. It localises to the chloroplast. This Nasturtium officinale (Watercress) protein is Large ribosomal subunit protein uL2cz/uL2cy (rpl2-A).